Consider the following 291-residue polypeptide: MQRDRRYRYRLAPYNKYQLPPCEEQSKATLSTSENSLWPECNSLTLHNVSEVRGIPSCVGFTVLQEWPIPWDMILTDYEMFILKKYMSVCMCCATINVEVTQLLHGHERWLIHCHCQRPGSLQCMSAGMLLGRWFKMAVYGALINKRCFWYREVVNHLMPKEVMYVGSTFVRGRHLIYFKIMYDGHAWLALEKVSFGWSAFNYGILNNMLVLCCDYCKDLSEIRMRCCARRTRLLMLKVVQVIAENTVRPLKHSRHERYRQQLLKGLIMHHRAILFGDYNQRENPWAADGH.

Belongs to the adenoviridae E4 30 to 34 kDa protein family. Interacts with E1B-55k.

It localises to the host nucleus. It is found in the host cytoplasm. Its function is as follows. Plays a major role to prevent cellular inhibition of viral genome replication by nuclear bodies. Assembles an SCF-like E3 ubiquitin ligase complex based on the cellular proteins ELOB, ELOC, CUL5 and RBX1, in cooperation with viral E1B-55K. This viral RING-type ligase ubiquitinates cellular substrates prior to proteasomal degradation: p53/TP53, LIG4, MRE11-RAD50-NBS1 (MRN) complex, ITGA3, DAXX and BLM. This Homo sapiens (Human) protein is Early E4 34 kDa protein.